The sequence spans 75 residues: Conotoxin Leo-O3 (75 aa).

Residues 1-22 (MKLTCVVIVAVLFLTACQLATA) form the signal peptide. Positions 23–42 (DISGGMRKHRALRSTTKLSR) are excised as a propeptide. 3 cysteine pairs are disulfide-bonded: cysteine 47/cysteine 60, cysteine 54/cysteine 63, and cysteine 59/cysteine 69. Cysteine 69 bears the Cysteine amide mark. Residues 70–75 (GSGLHV) constitute a propeptide that is removed on maturation.

It belongs to the conotoxin O1 superfamily. In terms of tissue distribution, expressed by the venom duct.

The protein localises to the secreted. This Conus leopardus (Leopard cone) protein is Conotoxin Leo-O3.